Reading from the N-terminus, the 220-residue chain is Vesicle-associated membrane protein 7 (220 aa).

The Cytoplasmic portion of the chain corresponds to 2 to 188 (AILFAVVARG…ARAMCMKNLK (187 aa)). Positions 7–110 (VVARGTTILA…AMNSEFSSVL (104 aa)) constitute a Longin domain. The v-SNARE coiled-coil homology domain occupies 125 to 185 (QVAETQAQVD…RNLARAMCMK (61 aa)). Residues 189–209 (LTIIIIIVSIVIIYIIVSAAC) traverse the membrane as a helical; Anchor for type IV membrane protein segment. Topologically, residues 210 to 220 (GGLAWPSCVQK) are vesicular.

The protein belongs to the synaptobrevin family.

It is found in the cytoplasmic vesicle. The protein localises to the secretory vesicle membrane. The protein resides in the golgi apparatus. It localises to the trans-Golgi network membrane. Its subcellular location is the late endosome membrane. It is found in the lysosome membrane. The protein localises to the endoplasmic reticulum membrane. The protein resides in the phagosome membrane. It localises to the synapse. Its subcellular location is the synaptosome. In terms of biological role, involved in the targeting and/or fusion of transport vesicles to their target membrane during transport of proteins from the early endosome to the lysosome. Required for heterotypic fusion of late endosomes with lysosomes and homotypic lysosomal fusion. Required for calcium regulated lysosomal exocytosis. Involved in the export of chylomicrons from the endoplasmic reticulum to the cis Golgi. Required for focal exocytosis of late endocytic vesicles during phagosome formation. The polypeptide is Vesicle-associated membrane protein 7 (Gallus gallus (Chicken)).